The sequence spans 424 residues: MAKQIQAIRGMNDILPTQSPLWQKLETVLRETVGSYGYSEIRTPIVESTDLFKRSIGEVTDIVEKEMYTFEDRNGDSLTLRPEGTASTVRAGNEHGLLYNQEQRLWYMGPMFRHERPQKGRYRQFHQFGVEVYGIPTADIDAEVLMLSAKLWEKLGITEHVTLELNTLGDVEERAAYRDALIAFLEQHKEVLDEDSQRRMYSNPLRVLDSKNADVQALLADAPVLMDYFGEDTRSHFSHLCELLEAVGIQYTINPRLVRGLDYYNRTVFEWVTSSLGSQGTVLAGGRYDGLVGQLGGKPTPAVGFAMGLERIVLLLETLELDKDIGPSVDVYVTAMGDNCRVEAIKIAQELRASLPTAKVMSHCGGGNFKKQMKRADKSGATVALVIGEDELANNQVAVKHLREDKAQELVARDALATYIAELI.

This sequence belongs to the class-II aminoacyl-tRNA synthetase family. As to quaternary structure, homodimer.

Its subcellular location is the cytoplasm. The enzyme catalyses tRNA(His) + L-histidine + ATP = L-histidyl-tRNA(His) + AMP + diphosphate + H(+). In Shewanella halifaxensis (strain HAW-EB4), this protein is Histidine--tRNA ligase.